The chain runs to 445 residues: Homoserine dehydrogenase (445 aa).

Residues Phe-26, Thr-28, and Val-29 each contribute to the NADPH site. Val-29 and Ala-58 together coordinate NAD(+). Val-29 is a binding site for NADP(+). An NADPH-binding site is contributed by Lys-119. Residue Lys-119 participates in NADP(+) binding. Residues Glu-143, Val-146, Gly-148, and Ile-150 each contribute to the Na(+) site. 2 residues coordinate NADP(+): Gly-201 and Glu-204. The L-homoserine site is built by Glu-204 and Asp-215. Catalysis depends on Lys-219, which acts as the Proton donor. Gly-321 is an NADPH binding site. Residue Gly-321 coordinates NAD(+). Gly-321 is an NADP(+) binding site. The ACT domain occupies 368–445; the sequence is HLDMDVEDRV…INSVIRLERD (78 aa).

Belongs to the homoserine dehydrogenase family. Requires a metal cation as cofactor.

The catalysed reaction is L-homoserine + NADP(+) = L-aspartate 4-semialdehyde + NADPH + H(+). The enzyme catalyses L-homoserine + NAD(+) = L-aspartate 4-semialdehyde + NADH + H(+). It functions in the pathway amino-acid biosynthesis; L-methionine biosynthesis via de novo pathway; L-homoserine from L-aspartate: step 3/3. The protein operates within amino-acid biosynthesis; L-threonine biosynthesis; L-threonine from L-aspartate: step 3/5. Its activity is regulated as follows. Feedback inhibition by threonine. In terms of biological role, catalyzes the conversion of L-aspartate-beta-semialdehyde (L-Asa) to L-homoserine (L-Hse), the third step in the biosynthesis of threonine and methionine from aspartate. In Corynebacterium glutamicum (strain ATCC 13032 / DSM 20300 / JCM 1318 / BCRC 11384 / CCUG 27702 / LMG 3730 / NBRC 12168 / NCIMB 10025 / NRRL B-2784 / 534), this protein is Homoserine dehydrogenase (hom).